Consider the following 445-residue polypeptide: Tubulin beta chain (445 aa).

Residues glutamine 11, glutamate 69, serine 138, glycine 142, threonine 143, glycine 144, asparagine 204, and asparagine 226 each coordinate GTP. Glutamate 69 serves as a coordination point for Mg(2+). The tract at residues 426–445 (QDATAEEEGEFEEEEGDVEA) is disordered. Positions 429–445 (TAEEEGEFEEEEGDVEA) are enriched in acidic residues.

This sequence belongs to the tubulin family. Dimer of alpha and beta chains. A typical microtubule is a hollow water-filled tube with an outer diameter of 25 nm and an inner diameter of 15 nM. Alpha-beta heterodimers associate head-to-tail to form protofilaments running lengthwise along the microtubule wall with the beta-tubulin subunit facing the microtubule plus end conferring a structural polarity. Microtubules usually have 13 protofilaments but different protofilament numbers can be found in some organisms and specialized cells. Interacts with DCX/apicortin; the interaction stabilizes microtubule assembly. Mg(2+) is required as a cofactor.

It localises to the cytoplasm. The protein localises to the cytoskeleton. Functionally, tubulin is the major constituent of microtubules, a cylinder consisting of laterally associated linear protofilaments composed of alpha- and beta-tubulin heterodimers. Microtubules grow by the addition of GTP-tubulin dimers to the microtubule end, where a stabilizing cap forms. Below the cap, tubulin dimers are in GDP-bound state, owing to GTPase activity of alpha-tubulin. This chain is Tubulin beta chain, found in Plasmodium falciparum.